Reading from the N-terminus, the 517-residue chain is Bifunctional purine biosynthesis protein PurH (517 aa).

Residues 1-146 form the MGS-like domain; it reads MKRLALLSTS…KNFAHLTVLC (146 aa).

It belongs to the PurH family.

The enzyme catalyses (6R)-10-formyltetrahydrofolate + 5-amino-1-(5-phospho-beta-D-ribosyl)imidazole-4-carboxamide = 5-formamido-1-(5-phospho-D-ribosyl)imidazole-4-carboxamide + (6S)-5,6,7,8-tetrahydrofolate. It carries out the reaction IMP + H2O = 5-formamido-1-(5-phospho-D-ribosyl)imidazole-4-carboxamide. The protein operates within purine metabolism; IMP biosynthesis via de novo pathway; 5-formamido-1-(5-phospho-D-ribosyl)imidazole-4-carboxamide from 5-amino-1-(5-phospho-D-ribosyl)imidazole-4-carboxamide (10-formyl THF route): step 1/1. It participates in purine metabolism; IMP biosynthesis via de novo pathway; IMP from 5-formamido-1-(5-phospho-D-ribosyl)imidazole-4-carboxamide: step 1/1. The sequence is that of Bifunctional purine biosynthesis protein PurH from Trichodesmium erythraeum (strain IMS101).